Here is a 201-residue protein sequence, read N- to C-terminus: Potassium-transporting ATPase KdpC subunit (201 aa).

Residues Ile13–Ile33 form a helical membrane-spanning segment.

Belongs to the KdpC family. As to quaternary structure, the system is composed of three essential subunits: KdpA, KdpB and KdpC.

It is found in the cell membrane. In terms of biological role, part of the high-affinity ATP-driven potassium transport (or Kdp) system, which catalyzes the hydrolysis of ATP coupled with the electrogenic transport of potassium into the cytoplasm. This subunit acts as a catalytic chaperone that increases the ATP-binding affinity of the ATP-hydrolyzing subunit KdpB by the formation of a transient KdpB/KdpC/ATP ternary complex. The protein is Potassium-transporting ATPase KdpC subunit of Clostridium botulinum (strain Eklund 17B / Type B).